A 509-amino-acid polypeptide reads, in one-letter code: MQSWSRVYCSLAKRGHFNRISHGLQGLSAVPLRTYADQPIDADVTVIGSGPGGYVAAIKAAQLGFKTVCVEKNETLGGTCLNVGCIPSKALLNNSHYYHMAHGKDFASRGIEMSEVRLNLDKMMEQKSTAVKALTGGIAHLFKQNKVVHVNGYGKITGKNQVTATKADGGTQVIDTKNILIATGSEVTPFPGIMIDEDTIVSSTGALSLKKVPEKMVVIGAGVIGVELGSVWQRLGADVTAVEFLGHVGGVGIDMEISKNFQRILQKQGFKFKLNTKVTGATKKSDGKIDVSIEAASGGKAEVITCDVLLVCIGRRPFTKNLGLEELGIELDPRGRIPVNTRFQTKIPNIYAIGDVVAGPMLAHKAEDEGIICVEGMAGGAVHIDYNCVPSVIYTHPEVAWVGKSEEQLKEEGIEYKVGKFPFAANSRAKTNADTDGMVKILGQKSTDRVLGAHILGPGAGGMVNEAALALEYGASCEDIARVCHAHPTLSEAFREANLAASFGKSINF.

Residues Met1 to Tyr35 constitute a mitochondrion transit peptide. Lys66 carries the post-translational modification N6-acetyllysine; alternate. The residue at position 66 (Lys66) is an N6-succinyllysine; alternate. FAD-binding positions include Glu71–Cys80 and Lys89. The cysteines at positions 80 and 85 are disulfide-linked. Residues Lys104, Lys122, Lys132, and Lys143 each carry the N6-acetyllysine; alternate modification. 4 positions are modified to N6-succinyllysine; alternate: Lys104, Lys122, Lys132, and Lys143. Gly154 is an FAD binding site. N6-succinyllysine is present on residues Lys159 and Lys166. Thr183–Ser185 is an FAD binding site. NAD(+) is bound by residues Gly220–Glu227 and Glu243. Lys273 and Lys277 each carry N6-succinyllysine. Val278 provides a ligand contact to NAD(+). Phosphoserine occurs at positions 285 and 297. Gly314 provides a ligand contact to NAD(+). The residue at position 346 (Lys346) is an N6-acetyllysine. Residues Asp355 and Met361–His364 each bind FAD. Lys410 carries the N6-acetyllysine; alternate modification. Lys410 carries the N6-succinyllysine; alternate modification. An N6-acetyllysine mark is found at Lys417 and Lys420. Lys430 bears the N6-succinyllysine mark. The active-site Proton acceptor is His487. Phosphoserine is present on Ser502. Lys505 is modified (N6-acetyllysine; alternate). Lys505 carries the post-translational modification N6-succinyllysine; alternate.

The protein belongs to the class-I pyridine nucleotide-disulfide oxidoreductase family. As to quaternary structure, homodimer. Part of the multimeric pyruvate dehydrogenase complex that contains multiple copies of pyruvate dehydrogenase (subunits PDHA (PDHA1 or PDHA2) and PDHB, E1), dihydrolipoamide acetyltransferase (DLAT, E2) and lipoamide dehydrogenase (DLD, E3). These subunits are bound to an inner core composed of about 48 DLAT and 12 PDHX molecules (by non covalent bonds). The 2-oxoglutarate dehydrogenase complex is composed of OGDH (2-oxoglutarate dehydrogenase; E1), DLST (dihydrolipoamide succinyltransferase; E2), DLD (dihydrolipoamide dehydrogenase; E3) and the assembly factor KGD4. It contains multiple copies of the three enzymatic components (E1, E2 and E3). In the nucleus, the 2-oxoglutarate dehydrogenase complex associates with KAT2A. Interacts with PDHX. It depends on FAD as a cofactor. In terms of processing, tyrosine phosphorylated.

The protein resides in the mitochondrion matrix. It localises to the nucleus. It is found in the cell projection. Its subcellular location is the cilium. The protein localises to the flagellum. The protein resides in the cytoplasmic vesicle. It localises to the secretory vesicle. It is found in the acrosome. The catalysed reaction is N(6)-[(R)-dihydrolipoyl]-L-lysyl-[protein] + NAD(+) = N(6)-[(R)-lipoyl]-L-lysyl-[protein] + NADH + H(+). Lipoamide dehydrogenase is a component of the glycine cleavage system as well as an E3 component of three alpha-ketoacid dehydrogenase complexes (pyruvate-, alpha-ketoglutarate-, and branched-chain amino acid-dehydrogenase complex). The 2-oxoglutarate dehydrogenase complex is mainly active in the mitochondrion. A fraction of the 2-oxoglutarate dehydrogenase complex also localizes in the nucleus and is required for lysine succinylation of histones: associates with KAT2A on chromatin and provides succinyl-CoA to histone succinyltransferase KAT2A. In monomeric form may have additional moonlighting function as serine protease. Involved in the hyperactivation of spermatazoa during capacitation and in the spermatazoal acrosome reaction. The chain is Dihydrolipoyl dehydrogenase, mitochondrial (DLD) from Pongo abelii (Sumatran orangutan).